Consider the following 203-residue polypeptide: Nucleoside triphosphate pyrophosphatase (203 aa).

The Proton acceptor role is filled by D78.

This sequence belongs to the Maf family. The cofactor is a divalent metal cation.

The protein resides in the cytoplasm. The enzyme catalyses a ribonucleoside 5'-triphosphate + H2O = a ribonucleoside 5'-phosphate + diphosphate + H(+). It carries out the reaction a 2'-deoxyribonucleoside 5'-triphosphate + H2O = a 2'-deoxyribonucleoside 5'-phosphate + diphosphate + H(+). Its function is as follows. Nucleoside triphosphate pyrophosphatase. May have a dual role in cell division arrest and in preventing the incorporation of modified nucleotides into cellular nucleic acids. This chain is Nucleoside triphosphate pyrophosphatase, found in Prochlorococcus marinus (strain AS9601).